The following is a 398-amino-acid chain: Succinate--CoA ligase [ADP-forming] subunit beta (398 aa).

The ATP-grasp domain occupies 9–254; the sequence is KRLLHEYGAP…ISEEDPKEIE (246 aa). ATP-binding positions include Lys46, 53 to 55, Glu109, Ala112, and Glu117; that span reads GRG. Residues Asn209 and Asp223 each contribute to the Mg(2+) site. Residues Asn274 and 331–333 contribute to the substrate site; that span reads GIM.

The protein belongs to the succinate/malate CoA ligase beta subunit family. Heterotetramer of two alpha and two beta subunits. Requires Mg(2+) as cofactor.

The catalysed reaction is succinate + ATP + CoA = succinyl-CoA + ADP + phosphate. It catalyses the reaction GTP + succinate + CoA = succinyl-CoA + GDP + phosphate. It participates in carbohydrate metabolism; tricarboxylic acid cycle; succinate from succinyl-CoA (ligase route): step 1/1. Succinyl-CoA synthetase functions in the citric acid cycle (TCA), coupling the hydrolysis of succinyl-CoA to the synthesis of either ATP or GTP and thus represents the only step of substrate-level phosphorylation in the TCA. The beta subunit provides nucleotide specificity of the enzyme and binds the substrate succinate, while the binding sites for coenzyme A and phosphate are found in the alpha subunit. The sequence is that of Succinate--CoA ligase [ADP-forming] subunit beta from Bartonella bacilliformis (strain ATCC 35685 / KC583 / Herrer 020/F12,63).